The sequence spans 234 residues: Endonuclease V (234 aa).

2 residues coordinate Mg(2+): D46 and D116.

The protein belongs to the endonuclease V family. Mg(2+) is required as a cofactor.

Its subcellular location is the cytoplasm. It carries out the reaction Endonucleolytic cleavage at apurinic or apyrimidinic sites to products with a 5'-phosphate.. Its function is as follows. DNA repair enzyme involved in the repair of deaminated bases. Selectively cleaves double-stranded DNA at the second phosphodiester bond 3' to a deoxyinosine leaving behind the intact lesion on the nicked DNA. This chain is Endonuclease V, found in Clostridium acetobutylicum (strain ATCC 824 / DSM 792 / JCM 1419 / IAM 19013 / LMG 5710 / NBRC 13948 / NRRL B-527 / VKM B-1787 / 2291 / W).